The chain runs to 493 residues: Aminotransferase swnA (493 aa).

It belongs to the class-I pyridoxal-phosphate-dependent aminotransferase family. The cofactor is pyridoxal 5'-phosphate.

It participates in mycotoxin biosynthesis. Its function is as follows. Aminotransferase; part of the gene cluster that mediates the biosynthesis of swainsonine (SW), a cytotoxic fungal alkaloid and a potential cancer therapy drug. Swainsonine production occurs via a multibranched pathway and is dispensable for fungal colonization of plants and infection of insect hosts. The first step of swainsonine biosynthesis is the production of the precursor pipecolic acid (PA) via conversion of L-lysine (Lys) to 1-piperideine-6-carboxylate (P6C) by the aminotransferase swnA, the latter being further reduced to PA by the reductase swnR. The PKS-NRPS hybrid synthetase swnK uptakes and condensates PA and malonyl-CoA with and without skipping of the ketoreductase (KR) domain in order to produce 3 intermediates, 1-oxoindolizidine, (1S)-1-hydroxyindolizin, and (1R)-1-hydroxyindolizine; with the transisomer (1S)-1-hydroxyindolizin being predominant. The terminal thioester reductase (TE) domain of swnK is involved in reduction of the thioester bond to release the intermediate aldehydes. The oxidoreductase swnN could contribute to the reduction of 1-oxoindolizidine to (1S)-1-hydroxyindolizin and (1R)-1-hydroxyindolizine, contributing to the major route of SW production. The dioxygenase swnH2 would be responsible for the oxidization of (1R)-1-hydroxyindolizine into (1R,2S)-1,2-dihydroxyindolizine and of (1S)-1-hydroxyindolizin to yield both (1R,2S)-1,2-dihydroxyindolizine and (1S,2S)-1,2-dihydroxyindolizine. The dioxygenase swnH1 then performs the conversion of the 1,2-dihydroxyindolizine epimers to SW. The polypeptide is Aminotransferase swnA (Arthroderma benhamiae (strain ATCC MYA-4681 / CBS 112371) (Trichophyton mentagrophytes)).